A 434-amino-acid polypeptide reads, in one-letter code: Trigger factor (434 aa).

Positions 160–245 (GDKVKMNFVG…LTEVQAANLP (86 aa)) constitute a PPIase FKBP-type domain.

Belongs to the FKBP-type PPIase family. Tig subfamily.

The protein localises to the cytoplasm. The enzyme catalyses [protein]-peptidylproline (omega=180) = [protein]-peptidylproline (omega=0). Functionally, involved in protein export. Acts as a chaperone by maintaining the newly synthesized protein in an open conformation. Functions as a peptidyl-prolyl cis-trans isomerase. The chain is Trigger factor from Shewanella baltica (strain OS223).